Consider the following 278-residue polypeptide: Undecaprenyl-diphosphatase (278 aa).

Transmembrane regions (helical) follow at residues 2-22 (ALVE…TEWL), 44-64 (AFME…VVLL), 85-105 (IEMW…GLLW), 113-133 (FYNY…FIVI), 150-170 (ITYT…IFPG), 189-209 (TVAA…ASAL), 223-243 (LMIL…SIKF), and 253-273 (FKIF…YFSA).

Belongs to the UppP family.

The protein localises to the cell membrane. The catalysed reaction is di-trans,octa-cis-undecaprenyl diphosphate + H2O = di-trans,octa-cis-undecaprenyl phosphate + phosphate + H(+). Catalyzes the dephosphorylation of undecaprenyl diphosphate (UPP). Confers resistance to bacitracin. In Desulfitobacterium hafniense (strain DSM 10664 / DCB-2), this protein is Undecaprenyl-diphosphatase.